Consider the following 96-residue polypeptide: Small ribosomal subunit protein bS16 (96 aa).

This sequence belongs to the bacterial ribosomal protein bS16 family.

The sequence is that of Small ribosomal subunit protein bS16 from Anaplasma phagocytophilum (strain HZ).